Here is a 206-residue protein sequence, read N- to C-terminus: Crossover junction endodeoxyribonuclease RuvC (206 aa).

Catalysis depends on residues aspartate 7, glutamate 67, and aspartate 138. Mg(2+) contacts are provided by aspartate 7, glutamate 67, and aspartate 138.

This sequence belongs to the RuvC family. Homodimer which binds Holliday junction (HJ) DNA. The HJ becomes 2-fold symmetrical on binding to RuvC with unstacked arms; it has a different conformation from HJ DNA in complex with RuvA. In the full resolvosome a probable DNA-RuvA(4)-RuvB(12)-RuvC(2) complex forms which resolves the HJ. Mg(2+) is required as a cofactor.

It is found in the cytoplasm. It carries out the reaction Endonucleolytic cleavage at a junction such as a reciprocal single-stranded crossover between two homologous DNA duplexes (Holliday junction).. Functionally, the RuvA-RuvB-RuvC complex processes Holliday junction (HJ) DNA during genetic recombination and DNA repair. Endonuclease that resolves HJ intermediates. Cleaves cruciform DNA by making single-stranded nicks across the HJ at symmetrical positions within the homologous arms, yielding a 5'-phosphate and a 3'-hydroxyl group; requires a central core of homology in the junction. The consensus cleavage sequence is 5'-(A/T)TT(C/G)-3'. Cleavage occurs on the 3'-side of the TT dinucleotide at the point of strand exchange. HJ branch migration catalyzed by RuvA-RuvB allows RuvC to scan DNA until it finds its consensus sequence, where it cleaves and resolves the cruciform DNA. This Anaeromyxobacter sp. (strain Fw109-5) protein is Crossover junction endodeoxyribonuclease RuvC.